The chain runs to 60 residues: Large ribosomal subunit protein bL32 (60 aa).

A disordered region spans residues 1 to 60 (MAVQQNKKTPSKRGMHRSHDFLVAPQLSVEPTTGETHMRHHISPNGFYRGRKVLKTKNDE). The segment covering 49–60 (RGRKVLKTKNDE) has biased composition (basic residues).

The protein belongs to the bacterial ribosomal protein bL32 family.

This chain is Large ribosomal subunit protein bL32, found in Janthinobacterium sp. (strain Marseille) (Minibacterium massiliensis).